Reading from the N-terminus, the 469-residue chain is MSTQNNQSIRSSCDRCRSHKLKCTVAPENSRSGSNRCTRCIRAQVTCVFGHRSQSKRSTNVKKADIKSGTNSQETTSMQASTIVPGRVSVSPDLWVGRQEVEEGLPIGSDGGPSMGDGDLWAELGTNHDLNVFDLTPSSLPTYNSQQQFSATDFCSAPMVPHSDLSAINSQEWQFDVSEHPDQTTTAPHVIVQLSALVTNIHETSKSLGESFWASLAESSQLKNYPIGRVLSLSQDFTAILECIWMSKTMDYKQSSSFVTSESDGQDGISSFELEDVLDYGELLSTVGTSPGRSDFSTSTHSSVATAVDMPTMLLVLSCYTSLTKLYSLVFEHFESHLSHLPHSYTSPTSHTSPRWGLGLQLGELPSADETCTKVYTAVQILLDAFQSVEDVVGLPRSLSAVRQQTCGKEEEAESGDVFNRASLWTDFLAKSVFKATVKGTSEEDCEEIRQLSIKVKSLKALIRERMKL.

The segment at residues C13–C47 is a DNA-binding region (zn(2)-C6 fungal-type). The interval S58–V84 is disordered. Positions S68–T82 are enriched in polar residues.

The protein localises to the nucleus. Its function is as follows. Transcription factor that regulates the expression of the gene cluster that mediates the biosynthesis of Equisetin. In Fusarium heterosporum, this protein is Equisetin cluster transcription factor eqxR.